Reading from the N-terminus, the 20-residue chain is Chemoheterotroph-specific protein (20 aa).

The chain is Chemoheterotroph-specific protein from Thiomonas delicata (Thiomonas cuprina).